A 345-amino-acid chain; its full sequence is Biotin synthase (345 aa).

The 228-residue stretch at 39 to 266 (NEVQVSTLLS…ASHVRLSAGR (228 aa)) folds into the Radical SAM core domain. C54, C58, and C61 together coordinate [4Fe-4S] cluster. [2Fe-2S] cluster is bound by residues C98, C129, C189, and R261.

The protein belongs to the radical SAM superfamily. Biotin synthase family. Homodimer. [4Fe-4S] cluster serves as cofactor. It depends on [2Fe-2S] cluster as a cofactor.

It catalyses the reaction (4R,5S)-dethiobiotin + (sulfur carrier)-SH + 2 reduced [2Fe-2S]-[ferredoxin] + 2 S-adenosyl-L-methionine = (sulfur carrier)-H + biotin + 2 5'-deoxyadenosine + 2 L-methionine + 2 oxidized [2Fe-2S]-[ferredoxin]. The protein operates within cofactor biosynthesis; biotin biosynthesis; biotin from 7,8-diaminononanoate: step 2/2. Catalyzes the conversion of dethiobiotin (DTB) to biotin by the insertion of a sulfur atom into dethiobiotin via a radical-based mechanism. The chain is Biotin synthase from Idiomarina loihiensis (strain ATCC BAA-735 / DSM 15497 / L2-TR).